Consider the following 357-residue polypeptide: UDP-N-acetylglucosamine--N-acetylmuramyl-(pentapeptide) pyrophosphoryl-undecaprenol N-acetylglucosamine transferase (357 aa).

Residues Ser14 to Gly16, Asn125, Ser190, and Gln290 contribute to the UDP-N-acetyl-alpha-D-glucosamine site.

Belongs to the glycosyltransferase 28 family. MurG subfamily.

It localises to the cell inner membrane. It catalyses the reaction di-trans,octa-cis-undecaprenyl diphospho-N-acetyl-alpha-D-muramoyl-L-alanyl-D-glutamyl-meso-2,6-diaminopimeloyl-D-alanyl-D-alanine + UDP-N-acetyl-alpha-D-glucosamine = di-trans,octa-cis-undecaprenyl diphospho-[N-acetyl-alpha-D-glucosaminyl-(1-&gt;4)]-N-acetyl-alpha-D-muramoyl-L-alanyl-D-glutamyl-meso-2,6-diaminopimeloyl-D-alanyl-D-alanine + UDP + H(+). The protein operates within cell wall biogenesis; peptidoglycan biosynthesis. Functionally, cell wall formation. Catalyzes the transfer of a GlcNAc subunit on undecaprenyl-pyrophosphoryl-MurNAc-pentapeptide (lipid intermediate I) to form undecaprenyl-pyrophosphoryl-MurNAc-(pentapeptide)GlcNAc (lipid intermediate II). The protein is UDP-N-acetylglucosamine--N-acetylmuramyl-(pentapeptide) pyrophosphoryl-undecaprenol N-acetylglucosamine transferase of Chlamydia felis (strain Fe/C-56) (Chlamydophila felis).